We begin with the raw amino-acid sequence, 353 residues long: Serine/threonine-protein kinase SRK2G (353 aa).

The region spanning 4 to 260 is the Protein kinase domain; it reads YDVVKDLGAG…LKEIKNHPWY (257 aa). Residues 10–18 and Lys33 each bind ATP; that span reads LGAGNFGVA. Residue Asp123 is the Proton acceptor of the active site. The tract at residues 299-353 is disordered; sequence RNPAPSTSAVKSSGSGADEEEEEDVEAEVEEEEDDEDEYEKHVKEAQSCQESDKA. Residues 302–313 show a composition bias toward polar residues; that stretch reads APSTSAVKSSGS. Acidic residues predominate over residues 315-336; it reads ADEEEEEDVEAEVEEEEDDEDE. The span at 337–353 shows a compositional bias: basic and acidic residues; it reads YEKHVKEAQSCQESDKA.

It belongs to the protein kinase superfamily. Ser/Thr protein kinase family. In terms of tissue distribution, expressed in seedlings.

Its subcellular location is the nucleus. The enzyme catalyses L-seryl-[protein] + ATP = O-phospho-L-seryl-[protein] + ADP + H(+). It carries out the reaction L-threonyl-[protein] + ATP = O-phospho-L-threonyl-[protein] + ADP + H(+). This chain is Serine/threonine-protein kinase SRK2G (SRK2G), found in Arabidopsis thaliana (Mouse-ear cress).